The chain runs to 137 residues: Chaperone protein YscB (137 aa).

In terms of assembly, interacts with SycN to form a complex which specifically binds to YopN.

The protein localises to the cytoplasm. It is found in the cell inner membrane. Functions as a specific chaperone for YopN. It could facilitate the secretion and the subsequent translocation of YopN. The polypeptide is Chaperone protein YscB (yscB) (Yersinia enterocolitica serotype O:8 / biotype 1B (strain NCTC 13174 / 8081)).